The following is a 465-amino-acid chain: FAD-dependent monooxygenase pyr5 (465 aa).

The N-terminal stretch at 1 to 16 (MRVLIIGGSIAGLTLA) is a signal peptide. FAD contacts are provided by glutamate 30, glycine 44, and arginine 103. The active site involves tyrosine 210. Residues aspartate 306 and alanine 319 each contribute to the FAD site. A helical transmembrane segment spans residues 440–456 (PTFPLTVAGLCLVAIVI).

Belongs to the paxM FAD-dependent monooxygenase family. It depends on FAD as a cofactor.

It is found in the membrane. It carries out the reaction 4-hydroxy-3-[(2E,6E)-farnesyl]-6-(pyridin-3-yl)-2H-pyran-2-one + NADPH + O2 + H(+) = 2-oxo-3-[(8S)-epoxy-(2E,6E)-farnesyl]-6-(pyridin-3-yl)-2H-pyran-4-olate + NADP(+) + H2O. The protein operates within secondary metabolite biosynthesis; terpenoid biosynthesis. Functionally, FAD-dependent monooxygenase; part of the gene cluster that mediates the biosynthesis of pyripyropene A, a specific human acyl-coenzyme A:cholesterol acyltransferase 2 inhibitor. The first step of the pathway is the synthesis of nicotinyl-CoA from nicotinic acid by the nicotinic acid-CoA ligase pyr1. Nicotinyl-CoA is then a substrate of polyketide synthase pyr2 to produce 4-hydroxy-6-(3-pyridinyl)-2H-pyran-2-one (HPPO) which is further prenylated by the polyprenyl transferase pyr6 to yield farnesyl-HPPO. The next steps consist of an epoxidation of farnesyl-HPPO to epoxyfarnesyl-HPPO by FAD-dependent monooxygenase pyr5 and a cyclization of the terpenoid portion by the terpene cyclase pyr4 to yield deacetyl-pyripyropene E. The 2 cytochrome P450 monooxygenases pyr3 and pyr9, and the 2 acetyltransferases pyr7 and pyr8 are involved in the conversion of deacetyl-pyripyropene E into pyripyropene A through several cycles of oxidation and acetylation steps. Pyr7 acetylates deacetyl-pyripyropene E to pyripyropene E which is oxidized to 11-deacetyl-pyripyropene O by pyr3, which is in turn acetylated into pyripyropene O by pyr8. Pyripyropene O is then oxidized to deacetyl-pyripyropene A by pyr9. Deacetyl-pyripyropene A is finally acetylated to pyripyropene A by pyr8. This chain is FAD-dependent monooxygenase pyr5, found in Aspergillus fumigatus (strain ATCC MYA-4609 / CBS 101355 / FGSC A1100 / Af293) (Neosartorya fumigata).